Consider the following 301-residue polypeptide: Eukaryotic translation initiation factor 3 subunit F (301 aa).

One can recognise an MPN domain in the interval valine 32–glycine 169.

Belongs to the eIF-3 subunit F family. In terms of assembly, component of the eukaryotic translation initiation factor 3 (eIF-3) complex.

The protein localises to the cytoplasm. Functionally, component of the eukaryotic translation initiation factor 3 (eIF-3) complex, which is involved in protein synthesis of a specialized repertoire of mRNAs and, together with other initiation factors, stimulates binding of mRNA and methionyl-tRNAi to the 40S ribosome. The eIF-3 complex specifically targets and initiates translation of a subset of mRNAs involved in cell proliferation. This is Eukaryotic translation initiation factor 3 subunit F from Mycosarcoma maydis (Corn smut fungus).